Reading from the N-terminus, the 1170-residue chain is NPC intracellular sterol transporter 1-related protein 1 (1170 aa).

An N-terminal signal peptide occupies residues 1–19; the sequence is MNVLWIIALVGQLMRLVQG. Cystine bridges form between Cys23/Cys75, Cys29/Cys41, Cys64/Cys110, Cys76/Cys114, Cys98/Cys230, Cys101/Cys156, Cys223/Cys235, and Cys232/Cys239. N-linked (GlcNAc...) asparagine glycans are attached at residues Asn123, Asn145, and Asn178. A helical membrane pass occupies residues 260-280; the sequence is LSVLIFYTICALFAFMWYYLC. The N-linked (GlcNAc...) asparagine glycan is linked to Asn314. The helical transmembrane segment at 341-361 threads the bilayer; sequence ILITTVFSIFVFSFIIFQYAT. An N-linked (GlcNAc...) asparagine glycan is attached at Asn401. Cystine bridges form between Cys438–Cys447 and Cys473–Cys480. Asn513 carries an N-linked (GlcNAc...) asparagine glycan. 6 helical membrane passes run 556 to 576, 585 to 605, 616 to 636, 667 to 687, 698 to 718, and 752 to 772; these read NDIS…TWAL, LLLG…AAGF, IIAE…IFLI, ILMS…VTMP, VSVI…LSLY, and IIII…EIQF. The SSD domain occupies 557–717; the sequence is DISTVAISYL…LTAYVSILSL (161 aa). 4 disulfides stabilise this stretch: Cys822–Cys828, Cys868–Cys925, Cys869–Cys891, and Cys879–Cys888. N-linked (GlcNAc...) asparagine glycans are attached at residues Asn900 and Asn940. The next 5 helical transmembrane spans lie at 1000–1020, 1027–1047, 1054–1074, 1099–1119, and 1133–1153; these read LTLK…SVFL, FLLA…MALL, VSLV…VHIV, IGES…CVLA, and MWFT…PALL.

The protein belongs to the patched family.

The protein localises to the vacuole membrane. Functionally, involved in sphingolipid trafficking. May recycle sphingolipids between cellular membranous compartments. The sequence is that of NPC intracellular sterol transporter 1-related protein 1 from Saccharomyces cerevisiae (strain ATCC 204508 / S288c) (Baker's yeast).